The sequence spans 202 residues: LexA repressor (202 aa).

The segment at residues 28–48 (RAEIASRLGFRSPNAAEEHLK) is a DNA-binding region (H-T-H motif). Active-site for autocatalytic cleavage activity residues include serine 119 and lysine 156.

The protein belongs to the peptidase S24 family. As to quaternary structure, homodimer.

It carries out the reaction Hydrolysis of Ala-|-Gly bond in repressor LexA.. Represses a number of genes involved in the response to DNA damage (SOS response), including recA and lexA. Binds to the 16 bp palindromic sequence 5'-CTGTATATATATACAG-3'. In the presence of single-stranded DNA, RecA interacts with LexA causing an autocatalytic cleavage which disrupts the DNA-binding part of LexA, leading to derepression of the SOS regulon and eventually DNA repair. This is LexA repressor from Sodalis glossinidius (strain morsitans).